Reading from the N-terminus, the 167-residue chain is MNLRFELQKLLNVCFLFASAYMFWQGLAIATNSASPIVVVLSGSMEPAFQRGDILFLWNRNTFNQVGDVVVYEVEGKQIPIVHRVLRQHNNHADKQFLLTKGDNNAGNDISLYANKKIYLNKSKEIVGTVKGYFPQLGYITIWISENKYAKFALLGMLGLSALLGGE.

Residues 1 to 9 (MNLRFELQK) are Cytoplasmic-facing. Residues 10–30 (LLNVCFLFASAYMFWQGLAIA) traverse the membrane as a helical; Signal-anchor for type II membrane protein segment. The Lumenal segment spans residues 31–167 (TNSASPIVVV…LGLSALLGGE (137 aa)). Active-site charge relay system residues include Ser44, His83, and Asp109. An N-linked (GlcNAc...) asparagine glycan is attached at Asn121. Residues 153 to 164 (ALLGMLGLSALL) form a C-terminal short (CTS) helix region.

It belongs to the peptidase S26B family. Component of the signal peptidase complex (SPC) composed of a catalytic subunit SEC11 and three accessory subunits SPC1, SPC2 and SPC3. The complex induces a local thinning of the ER membrane which is used to measure the length of the signal peptide (SP) h-region of protein substrates. This ensures the selectivity of the complex towards h-regions shorter than 18-20 amino acids. SPC associates with the translocon complex.

The protein localises to the endoplasmic reticulum membrane. The catalysed reaction is Cleavage of hydrophobic, N-terminal signal or leader sequences from secreted and periplasmic proteins.. In terms of biological role, catalytic component of the signal peptidase complex (SPC) which catalyzes the cleavage of N-terminal signal sequences from nascent proteins as they are translocated into the lumen of the endoplasmic reticulum. Specifically cleaves N-terminal signal peptides that contain a hydrophobic alpha-helix (h-region) shorter than 18-20 amino acids. The polypeptide is Signal peptidase complex catalytic subunit SEC11 (SEC11) (Saccharomyces cerevisiae (strain Lalvin QA23) (Baker's yeast)).